Consider the following 147-residue polypeptide: Spermidine export protein MdtJ (147 aa).

The next 4 helical transmembrane spans lie at 1–21, 31–51, 54–74, and 81–101; these read MIYW…TLSM, TGHI…SLAV, VALG…ITIF, and ETLS…ILLV. Positions 105–147 are disordered; it reads TRKPKQPNCHRGNRPPSVQELKTQTTGHHKGVAVESGEHHAAA.

The protein belongs to the drug/metabolite transporter (DMT) superfamily. Small multidrug resistance (SMR) (TC 2.A.7.1) family. MdtJ subfamily. In terms of assembly, forms a complex with MdtI.

The protein localises to the cell inner membrane. Its function is as follows. Catalyzes the excretion of spermidine. The polypeptide is Spermidine export protein MdtJ (Yersinia pestis bv. Antiqua (strain Antiqua)).